The primary structure comprises 102 residues: NADH-quinone oxidoreductase subunit K (102 aa).

3 helical membrane-spanning segments follow: residues 5-25 (LEHY…GIFV), 31-51 (IVIL…MVAF), and 66-86 (FVLT…VVFF).

Belongs to the complex I subunit 4L family. NDH-1 is composed of 14 different subunits. Subunits NuoA, H, J, K, L, M, N constitute the membrane sector of the complex.

It is found in the cellular chromatophore membrane. The enzyme catalyses a quinone + NADH + 5 H(+)(in) = a quinol + NAD(+) + 4 H(+)(out). NDH-1 shuttles electrons from NADH, via FMN and iron-sulfur (Fe-S) centers, to quinones in the respiratory chain. The immediate electron acceptor for the enzyme in this species is believed to be ubiquinone. Couples the redox reaction to proton translocation (for every two electrons transferred, four hydrogen ions are translocated across the cytoplasmic membrane), and thus conserves the redox energy in a proton gradient. The polypeptide is NADH-quinone oxidoreductase subunit K (Rhodobacter capsulatus (Rhodopseudomonas capsulata)).